A 312-amino-acid polypeptide reads, in one-letter code: Malate dehydrogenase (312 aa).

NAD(+) is bound by residues 7–13 (GAAGGIG) and D34. The substrate site is built by R81 and R87. Residues N94 and 117-119 (ITN) each bind NAD(+). Positions 119 and 153 each coordinate substrate. The active-site Proton acceptor is H177. M227 provides a ligand contact to NAD(+).

Belongs to the LDH/MDH superfamily. MDH type 1 family. Homodimer.

It catalyses the reaction (S)-malate + NAD(+) = oxaloacetate + NADH + H(+). Catalyzes the reversible oxidation of malate to oxaloacetate. This chain is Malate dehydrogenase, found in Salmonella arizonae (strain ATCC BAA-731 / CDC346-86 / RSK2980).